Reading from the N-terminus, the 132-residue chain is Fatty acid-binding protein 9 (132 aa).

Residues Ser13, Ser14, Ser44, and Ser91 each carry the phosphoserine modification.

Belongs to the calycin superfamily. Fatty-acid binding protein (FABP) family.

Its subcellular location is the cytoplasm. The protein is Fatty acid-binding protein 9 (FABP9) of Homo sapiens (Human).